The following is a 154-amino-acid chain: Transcriptional repressor NrdR (154 aa).

Residues 3–34 (CPYCRHPDSRVVDSREADDGQLIRRRRSCPEC) fold into a zinc finger. The 91-residue stretch at 46 to 136 (LAVVKRSGVT…VYRSFESLAD (91 aa)) folds into the ATP-cone domain.

Belongs to the NrdR family. Requires Zn(2+) as cofactor.

Its function is as follows. Negatively regulates transcription of bacterial ribonucleotide reductase nrd genes and operons by binding to NrdR-boxes. This is Transcriptional repressor NrdR from Salinispora arenicola (strain CNS-205).